We begin with the raw amino-acid sequence, 100 residues long: Small ribosomal subunit protein uS14c (100 aa).

The protein belongs to the universal ribosomal protein uS14 family. In terms of assembly, part of the 30S ribosomal subunit.

The protein resides in the plastid. Functionally, binds 16S rRNA, required for the assembly of 30S particles. The polypeptide is Small ribosomal subunit protein uS14c (Cuscuta exaltata (Tall dodder)).